A 376-amino-acid chain; its full sequence is PCM7-4 (376 aa).

Functionally, has antibacterial activity against Listeria monocytogenes. The chain is PCM7-4 from Bacillus velezensis.